The chain runs to 377 residues: Cytoplasmic tRNA 2-thiolation protein 1 (377 aa).

Belongs to the TtcA family. CTU1/NCS6/ATPBD3 subfamily.

It is found in the cytoplasm. It functions in the pathway tRNA modification; 5-methoxycarbonylmethyl-2-thiouridine-tRNA biosynthesis. In terms of biological role, plays a central role in 2-thiolation of mcm(5)S(2)U at tRNA wobble positions of tRNA(Lys), tRNA(Glu) and tRNA(Gln). Directly binds tRNAs and probably acts by catalyzing adenylation of tRNAs, an intermediate required for 2-thiolation. It is unclear whether it acts as a sulfurtransferase that transfers sulfur from thiocarboxylated URM1 onto the uridine of tRNAs at wobble position. Prior mcm(5) tRNA modification by the elongator complex is required for 2-thiolation. May also be involved in protein urmylation. The sequence is that of Cytoplasmic tRNA 2-thiolation protein 1 from Debaryomyces hansenii (strain ATCC 36239 / CBS 767 / BCRC 21394 / JCM 1990 / NBRC 0083 / IGC 2968) (Yeast).